Here is a 207-residue protein sequence, read N- to C-terminus: Ribosomal RNA large subunit methyltransferase E (207 aa).

S-adenosyl-L-methionine is bound by residues Gly60, Trp62, Asp80, Asp96, and Asp121. The active-site Proton acceptor is the Lys161.

It belongs to the class I-like SAM-binding methyltransferase superfamily. RNA methyltransferase RlmE family.

The protein localises to the cytoplasm. The enzyme catalyses uridine(2552) in 23S rRNA + S-adenosyl-L-methionine = 2'-O-methyluridine(2552) in 23S rRNA + S-adenosyl-L-homocysteine + H(+). Functionally, specifically methylates the uridine in position 2552 of 23S rRNA at the 2'-O position of the ribose in the fully assembled 50S ribosomal subunit. This chain is Ribosomal RNA large subunit methyltransferase E, found in Azotobacter vinelandii (strain DJ / ATCC BAA-1303).